The following is a 108-amino-acid chain: Urease subunit gamma (108 aa).

The protein belongs to the urease gamma subunit family. As to quaternary structure, heterotrimer of UreA (gamma), UreB (beta) and UreC (alpha) subunits. Three heterotrimers associate to form the active enzyme.

The protein resides in the cytoplasm. The catalysed reaction is urea + 2 H2O + H(+) = hydrogencarbonate + 2 NH4(+). It participates in nitrogen metabolism; urea degradation; CO(2) and NH(3) from urea (urease route): step 1/1. The protein is Urease subunit gamma of Trichodesmium erythraeum (strain IMS101).